Reading from the N-terminus, the 781-residue chain is Probable serine/threonine-protein kinase C70.05c (781 aa).

2 disordered regions span residues 1–315 (MPSD…PLVS) and 368–417 (YSGK…TNIS). Residues 21-31 (ESPSSRSIGSG) are compositionally biased toward low complexity. The segment covering 43–63 (FKNSFLSRKNSSQIKSPSDYK) has biased composition (polar residues). A compositionally biased stretch (basic and acidic residues) spans 64–73 (SSAHEQRVNH). The span at 74–92 (TTDSMAHVPGNNSPLQTPQ) shows a compositional bias: polar residues. Phosphoserine is present on S94. Residues 112–121 (SRHHKPHHSG) show a composition bias toward basic residues. Composition is skewed to polar residues over residues 136–146 (SNANSPTSESP), 161–195 (KNTS…PNSR), and 206–228 (NSAS…SLSR). Position 253 is a phosphoserine (S253). Low complexity predominate over residues 272 to 304 (PLTASPTPSSPTGTPNSMSKSPSLSSLASTGAS). Residues 379–406 (NVGSSANTAPNSPTSANSSEGNQGNGPT) are compositionally biased toward polar residues. Positions 432–742 (AKRVVPRLSA…AQEALNLPFV (311 aa)) constitute a Protein kinase domain. ATP-binding positions include 452-460 (MGSGATAVI) and K480. Catalysis depends on D584, which acts as the Proton acceptor.

This sequence belongs to the protein kinase superfamily. Ser/Thr protein kinase family.

The protein localises to the cytoplasm. The enzyme catalyses L-seryl-[protein] + ATP = O-phospho-L-seryl-[protein] + ADP + H(+). The catalysed reaction is L-threonyl-[protein] + ATP = O-phospho-L-threonyl-[protein] + ADP + H(+). This chain is Probable serine/threonine-protein kinase C70.05c, found in Schizosaccharomyces pombe (strain 972 / ATCC 24843) (Fission yeast).